A 231-amino-acid chain; its full sequence is Endonuclease NucS (231 aa).

This sequence belongs to the NucS endonuclease family.

The protein resides in the cytoplasm. Its function is as follows. Cleaves both 3' and 5' ssDNA extremities of branched DNA structures. The protein is Endonuclease NucS of Pseudarthrobacter chlorophenolicus (strain ATCC 700700 / DSM 12829 / CIP 107037 / JCM 12360 / KCTC 9906 / NCIMB 13794 / A6) (Arthrobacter chlorophenolicus).